Here is a 72-residue protein sequence, read N- to C-terminus: Guanine nucleotide-binding protein subunit gamma (72 aa).

The interval 32 to 72 is disordered; that stretch reads MVSVAPPKANPSVSSKTKQQQHFKPGKATKDKATTKCCTIS. C68 carries S-palmitoyl cysteine lipidation. Residue C69 is modified to Cysteine methyl ester. C69 carries S-farnesyl cysteine lipidation. Residues 70–72 constitute a propeptide, removed in mature form; the sequence is TIS.

This sequence belongs to the G protein gamma family. In terms of assembly, g proteins are composed of 3 units, alpha, beta and gamma. Binding of the beta-gamma subunit complex (git5-git11) to the alpha subunit (gpa2) facilitates interaction with GPCR git3.

The protein localises to the cell membrane. Its function is as follows. Gamma subunit of the heterotrimeric guanine nucleotide-binding protein (G protein) involved in glucose-induced cAMP signaling. The beta-gamma subunits (git5-git11) promote binding of the alpha subunit gpa2 to GPCR git3, which senses extracellular glucose, to activate cAMP-PKA signaling and repress sexual development and gluconeogenesis. This Schizosaccharomyces pombe (strain 972 / ATCC 24843) (Fission yeast) protein is Guanine nucleotide-binding protein subunit gamma (git11).